Consider the following 237-residue polypeptide: Ribose-5-phosphate isomerase A (237 aa).

Residues 33–36, 88–91, and 101–104 contribute to the substrate site; these read TGST, DGAD, and KGRG. E110 (proton acceptor) is an active-site residue. Substrate is bound at residue K128.

It belongs to the ribose 5-phosphate isomerase family. As to quaternary structure, homodimer.

The enzyme catalyses aldehydo-D-ribose 5-phosphate = D-ribulose 5-phosphate. It functions in the pathway carbohydrate degradation; pentose phosphate pathway; D-ribose 5-phosphate from D-ribulose 5-phosphate (non-oxidative stage): step 1/1. Functionally, catalyzes the reversible conversion of ribose-5-phosphate to ribulose 5-phosphate. The polypeptide is Ribose-5-phosphate isomerase A (Methanoregula boonei (strain DSM 21154 / JCM 14090 / 6A8)).